Here is a 294-residue protein sequence, read N- to C-terminus: Methionine aminopeptidase (294 aa).

Residue His-65 participates in substrate binding. Residues Asp-85, Asp-96, and His-156 each contribute to the a divalent metal cation site. His-164 provides a ligand contact to substrate. Residues Glu-189 and Glu-279 each coordinate a divalent metal cation.

This sequence belongs to the peptidase M24A family. Methionine aminopeptidase archaeal type 2 subfamily. As to quaternary structure, monomer. The cofactor is Co(2+). It depends on Zn(2+) as a cofactor. Requires Mn(2+) as cofactor. Fe(2+) serves as cofactor.

The catalysed reaction is Release of N-terminal amino acids, preferentially methionine, from peptides and arylamides.. In terms of biological role, removes the N-terminal methionine from nascent proteins. The N-terminal methionine is often cleaved when the second residue in the primary sequence is small and uncharged (Met-Ala-, Cys, Gly, Pro, Ser, Thr, or Val). The polypeptide is Methionine aminopeptidase (Methanocaldococcus jannaschii (strain ATCC 43067 / DSM 2661 / JAL-1 / JCM 10045 / NBRC 100440) (Methanococcus jannaschii)).